Consider the following 98-residue polypeptide: NADH-ubiquinone oxidoreductase chain 4L (98 aa).

3 helical membrane-spanning segments follow: residues 1–21 (MSMV…GLLM), 29–49 (SLLC…VTIL), and 61–81 (IILL…LVMV).

This sequence belongs to the complex I subunit 4L family. As to quaternary structure, core subunit of respiratory chain NADH dehydrogenase (Complex I) which is composed of 45 different subunits.

The protein localises to the mitochondrion inner membrane. The enzyme catalyses a ubiquinone + NADH + 5 H(+)(in) = a ubiquinol + NAD(+) + 4 H(+)(out). In terms of biological role, core subunit of the mitochondrial membrane respiratory chain NADH dehydrogenase (Complex I) which catalyzes electron transfer from NADH through the respiratory chain, using ubiquinone as an electron acceptor. Part of the enzyme membrane arm which is embedded in the lipid bilayer and involved in proton translocation. In Callorhinus ursinus (Northern fur seal), this protein is NADH-ubiquinone oxidoreductase chain 4L (MT-ND4L).